The chain runs to 57 residues: Thiocillin GE37468 (57 aa).

Residues 1–42 (MGNNEEYFIDVNDLSIDVFDVVEQGGAVTALTADHGMPEVGA) constitute a propeptide, removed in mature form. The segment at residues 43–44 (ST) is a cross-link (5-methyloxazole-4-carboxylic acid (Ser-Thr)). The pyridine-2,5-dicarboxylic acid (Ser-Cys) (with S-53) cross-link spans 43-52 (STNCFCYICC). The pyridine-2,5-dicarboxylic acid (Ser-Ser) (with C-52) cross-link spans 43-53 (STNCFCYICCS). A cross-link (thiazole-4-carboxylic acid (Asn-Cys)) is located at residues 45-46 (NC). Residues 47–48 (FC) constitute a cross-link (thiazoline-4-carboxylic acid (Phe-Cys)). 5-hydroxy-3-methylproline (Ile) is present on I50. A cross-link (thiazole-4-carboxylic acid (Ile-Cys)) is located at residues 50–51 (IC). Residues 51 to 52 (CC) constitute a cross-link (thiazole-4-carboxylic acid (Cys-Cys)). The segment at residues 53-54 (SC) is a cross-link (thiazole-4-carboxylic acid (Ser-Cys)). S55 and S56 each carry 2,3-didehydroalanine (Ser). N57 is a propeptide (removed in mature form).

Maturation of thiazole and oxazole containing antibiotics involves the enzymatic condensation of a Cys, Ser or Thr with the alpha-carbonyl of the preceding amino acid to form a thioether or ether bond, then dehydration to form a double bond with the alpha-amino nitrogen. Thiazoline or oxazoline ring are dehydrogenated to form thiazole or oxazole rings. Post-translationally, maturation of pyridinyl containing antibiotics involves the cross-linking of a Ser and a Cys-Ser pair usually separated by 7 or 8 residues along the peptide chain. The Ser residues are dehydrated to didehydroalanines, then bonded between their beta carbons. The alpha carbonyl of the Cys condenses with alpha carbon of the first Ser to form a pyridinyl ring. The ring may be multiply dehydrogenated to form a pyridine ring with loss of the amino nitrogen of the first Ser.

It is found in the secreted. Functionally, has bacteriocidal activity against both aerobic and anaerobic Gram-positive bacteria. Inhibits growth of B.subtilis (MIC=0.047 ug/ml) and methicillin-resistant S.aureus (MRSA) (MIC=0.047 ug/ml). Has poor activity against Gram-negative bacteria, with the exception of B.fragilis. Inhibits bacterial protein biosynthesis by acting on elongation factor Tu (EF-Tu). Full antibiotic activity depends on the presence of the modified residue Ile-50. The protein is Thiocillin GE37468 (getA) of Streptomyces sp.